A 470-amino-acid chain; its full sequence is 24-hydroxycholesterol 7-alpha-hydroxylase (470 aa).

Transmembrane regions (helical) follow at residues 3–23 (IMELFSPIAIAVLGSCVLFLF) and 270–290 (VVLWAALANAPPIAFWTLGYI). Cys415 contacts heme.

This sequence belongs to the cytochrome P450 family. Heme serves as cofactor. In terms of tissue distribution, liver specific. Hepatic expression is sexually dimorphic (female &gt; male).

Its subcellular location is the endoplasmic reticulum membrane. It is found in the microsome membrane. The catalysed reaction is (24S)-hydroxycholesterol + reduced [NADPH--hemoprotein reductase] + O2 = (24S)-7alpha-dihydroxycholesterol + oxidized [NADPH--hemoprotein reductase] + H2O + H(+). It functions in the pathway steroid metabolism; cholesterol degradation. It participates in lipid metabolism; bile acid biosynthesis. A cytochrome P450 monooxygenase involved in neural cholesterol clearance through bile acid synthesis. Catalyzes 7-alpha hydroxylation of (24S)-hydroxycholesterol, a neural oxysterol that is metabolized to bile acids in the liver. Mechanistically, uses molecular oxygen inserting one oxygen atom into a substrate, and reducing the second into a water molecule, with two electrons provided by NADPH via cytochrome P450 reductase (CPR; NADPH-ferrihemoprotein reductase). This is 24-hydroxycholesterol 7-alpha-hydroxylase (Cyp39a1) from Mus musculus (Mouse).